A 410-amino-acid chain; its full sequence is Serine hydroxymethyltransferase (410 aa).

(6S)-5,6,7,8-tetrahydrofolate-binding positions include leucine 116 and 120–122 (GHL). Position 225 is an N6-(pyridoxal phosphate)lysine (lysine 225).

This sequence belongs to the SHMT family. In terms of assembly, homodimer. Requires pyridoxal 5'-phosphate as cofactor.

The protein resides in the cytoplasm. The catalysed reaction is (6R)-5,10-methylene-5,6,7,8-tetrahydrofolate + glycine + H2O = (6S)-5,6,7,8-tetrahydrofolate + L-serine. It functions in the pathway one-carbon metabolism; tetrahydrofolate interconversion. It participates in amino-acid biosynthesis; glycine biosynthesis; glycine from L-serine: step 1/1. Functionally, catalyzes the reversible interconversion of serine and glycine with tetrahydrofolate (THF) serving as the one-carbon carrier. This reaction serves as the major source of one-carbon groups required for the biosynthesis of purines, thymidylate, methionine, and other important biomolecules. Also exhibits THF-independent aldolase activity toward beta-hydroxyamino acids, producing glycine and aldehydes, via a retro-aldol mechanism. This chain is Serine hydroxymethyltransferase, found in Lacticaseibacillus casei (strain BL23) (Lactobacillus casei).